The primary structure comprises 217 residues: Small ribosomal subunit protein uS2 (217 aa).

The protein belongs to the universal ribosomal protein uS2 family.

The protein is Small ribosomal subunit protein uS2 of Korarchaeum cryptofilum (strain OPF8).